The following is a 258-amino-acid chain: UPF0246 protein YaaA (258 aa).

The protein belongs to the UPF0246 family.

This is UPF0246 protein YaaA from Escherichia coli O17:K52:H18 (strain UMN026 / ExPEC).